Here is a 348-residue protein sequence, read N- to C-terminus: DnaJ homolog subfamily B member 5 (348 aa).

The J domain occupies 4-68 (DYYKILGIPS…KKRSLYDQYG (65 aa)).

The chain is DnaJ homolog subfamily B member 5 (Dnajb5) from Mus musculus (Mouse).